Here is a 737-residue protein sequence, read N- to C-terminus: Dynein axonemal intermediate chain 7 homolog (737 aa).

Residues Met-1–Thr-15 are compositionally biased toward polar residues. 3 disordered regions span residues Met-1 to Ala-61, Lys-274 to Glu-362, and Ser-410 to Pro-452. Basic and acidic residues-rich tracts occupy residues Arg-18 to Ala-61, Val-276 to Gln-316, and Glu-333 to Lys-349. 2 stretches are compositionally biased toward polar residues: residues Asp-417–Ala-429 and Pro-441–Pro-451.

Belongs to the DNAI7 family.

The protein is Dynein axonemal intermediate chain 7 homolog (AXP83.9) of Ciona intestinalis (Transparent sea squirt).